The following is a 411-amino-acid chain: Citrate synthase (411 aa).

Active-site residues include histidine 304 and aspartate 363.

This sequence belongs to the citrate synthase family.

It catalyses the reaction oxaloacetate + acetyl-CoA + H2O = citrate + CoA + H(+). The protein operates within carbohydrate metabolism; tricarboxylic acid cycle; isocitrate from oxaloacetate: step 1/2. This Rickettsia massiliae protein is Citrate synthase (gltA).